Here is a 238-residue protein sequence, read N- to C-terminus: Cell division protein A (238 aa).

In terms of assembly, interacts with CdvB.

It is found in the cytoplasm. It localises to the nucleoid. Its subcellular location is the cell membrane. In terms of biological role, part of a cell division machinery. The CdvA, CdvB and CdvC proteins polymerize between segregating nucleoids and persist throughout cell division, forming a successively smaller structure during constriction. CdvA is a membrane interacting protein that recruits ESCRT-III homologs to the membrane. This chain is Cell division protein A, found in Sulfolobus acidocaldarius (strain ATCC 33909 / DSM 639 / JCM 8929 / NBRC 15157 / NCIMB 11770).